The chain runs to 25 residues: Fructokinase-1 (25 aa).

The protein belongs to the ROK (NagC/XylR) family. As to quaternary structure, homodimer. Requires Mg(2+) as cofactor.

It carries out the reaction D-fructose + ATP = D-fructose 6-phosphate + ADP + H(+). Inhibition by zinc ions (Potential). Inactivated by EDTA. This is Fructokinase-1 from Lactococcus lactis subsp. lactis (Streptococcus lactis).